The sequence spans 427 residues: Lupus La protein homolog B (427 aa).

In terms of domain architecture, HTH La-type RNA-binding spans D6 to E98. The 93-residue stretch at R110–E202 folds into the RRM domain. Disordered stretches follow at residues E193 to A220 and E319 to Q427. In terms of domain architecture, xRRM spans E226–S348. The Nuclear localization signal signature appears at K315–R331. Composition is skewed to basic residues over residues K327–G342 and R351–K360. Acidic residues predominate over residues S365–E376. Basic and acidic residues predominate over residues R405–Q427.

In terms of processing, phosphorylated.

It is found in the nucleus. La protein plays a role in the transcription of RNA polymerase III. It is most probably a transcription termination factor. Binds to the 3' termini of virtually all nascent polymerase III transcripts. This is Lupus La protein homolog B (ssb-b) from Xenopus laevis (African clawed frog).